Reading from the N-terminus, the 1389-residue chain is DNA-directed RNA polymerase subunit beta'' (1389 aa).

The Zn(2+) site is built by Cys-224, Cys-295, Cys-302, and Cys-305.

It belongs to the RNA polymerase beta' chain family. RpoC2 subfamily. In terms of assembly, in plastids the minimal PEP RNA polymerase catalytic core is composed of four subunits: alpha, beta, beta', and beta''. When a (nuclear-encoded) sigma factor is associated with the core the holoenzyme is formed, which can initiate transcription. Requires Zn(2+) as cofactor.

It localises to the plastid. Its subcellular location is the chloroplast. The catalysed reaction is RNA(n) + a ribonucleoside 5'-triphosphate = RNA(n+1) + diphosphate. In terms of biological role, DNA-dependent RNA polymerase catalyzes the transcription of DNA into RNA using the four ribonucleoside triphosphates as substrates. This Atropa belladonna (Belladonna) protein is DNA-directed RNA polymerase subunit beta''.